The following is a 245-amino-acid chain: Zinc finger protein 575 (245 aa).

The tract at residues 1 to 67 (MLERGAESAA…PPQRPHRCPD (67 aa)) is disordered. Over residues 36–49 (PSQSAPGPTASAGS) the composition is skewed to low complexity. Positions 52–63 (RPRRRPPPQRPH) are enriched in basic residues. C2H2-type zinc fingers lie at residues 63 to 85 (HRCP…RLAH), 91 to 113 (HPCP…RLTH), 119 to 141 (HPCP…LWTH), 147 to 169 (YPCP…RHTH), 177 to 199 (YPCP…RLCH), and 213 to 240 (HRCS…QVEH).

Belongs to the krueppel C2H2-type zinc-finger protein family.

The protein localises to the nucleus. May be involved in transcriptional regulation. This is Zinc finger protein 575 (ZNF575) from Homo sapiens (Human).